A 417-amino-acid polypeptide reads, in one-letter code: Queuine tRNA-ribosyltransferase accessory subunit 2 (417 aa).

Zn(2+)-binding residues include C324, C326, C329, and H355.

Belongs to the queuine tRNA-ribosyltransferase family. QTRT2 subfamily. In terms of assembly, heterodimer of a catalytic subunit and an accessory subunit. The cofactor is Zn(2+).

The protein localises to the cytoplasm. Its function is as follows. Non-catalytic subunit of the queuine tRNA-ribosyltransferase (TGT) that catalyzes the base-exchange of a guanine (G) residue with queuine (Q) at position 34 (anticodon wobble position) in tRNAs with GU(N) anticodons (tRNA-Asp, -Asn, -His and -Tyr), resulting in the hypermodified nucleoside queuosine (7-(((4,5-cis-dihydroxy-2-cyclopenten-1-yl)amino)methyl)-7-deazaguanosine). The sequence is that of Queuine tRNA-ribosyltransferase accessory subunit 2 from Drosophila virilis (Fruit fly).